The primary structure comprises 459 residues: Serine carboxypeptidase-like 27 (459 aa).

An N-terminal signal peptide occupies residues methionine 1–alanine 20. 3 disulfides stabilise this stretch: cysteine 91/cysteine 344, cysteine 252/cysteine 264, and cysteine 288/cysteine 312. Residue asparagine 142 is glycosylated (N-linked (GlcNAc...) asparagine). Serine 184 is an active-site residue. N-linked (GlcNAc...) asparagine glycans are attached at residues asparagine 289 and asparagine 333. Catalysis depends on residues aspartate 381 and histidine 433.

Belongs to the peptidase S10 family. Ubiquitous.

The protein localises to the secreted. Probable carboxypeptidase. This is Serine carboxypeptidase-like 27 (SCPL27) from Arabidopsis thaliana (Mouse-ear cress).